The chain runs to 88 residues: uncharacterized protein (88 aa).

The signal sequence occupies residues 1 to 23; sequence MAVSGLRLTIVWGLLVLILTCQA. A compositionally biased stretch (basic and acidic residues) spans 25 to 40; the sequence is DKPEGKPDEQPHDSGK. Residues 25–45 form a disordered region; it reads DKPEGKPDEQPHDSGKNSEPA.

Its subcellular location is the secreted. This is an uncharacterized protein from Bos taurus (Bovine).